We begin with the raw amino-acid sequence, 159 residues long: MLYSIGKVVQTHGIKGEVKIKPHTDFDRFVKGFDVIIKDTKYKIQTVREQKDLLLVSFVGYPTLTDVEHLKQQEIYTDEEPLDLESDAFHLPKLIGLKVYDQHNYLIGTVLELVDVPQGYLLRILRDDNGKTVLIPFIDKFIKSVDETSIHIETIEGLI.

The PRC barrel domain occupies 86 to 159; that stretch reads SDAFHLPKLI…IHIETIEGLI (74 aa).

Belongs to the RimM family. As to quaternary structure, binds ribosomal protein uS19.

The protein resides in the cytoplasm. Its function is as follows. An accessory protein needed during the final step in the assembly of 30S ribosomal subunit, possibly for assembly of the head region. Essential for efficient processing of 16S rRNA. May be needed both before and after RbfA during the maturation of 16S rRNA. It has affinity for free ribosomal 30S subunits but not for 70S ribosomes. The polypeptide is Ribosome maturation factor RimM (Acholeplasma laidlawii (strain PG-8A)).